Consider the following 522-residue polypeptide: Circadian clock oscillator protein KaiC (522 aa).

2 consecutive KaiC domains span residues 1–248 (MKKS…INIF) and 262–522 (ARVS…DDLL). ATP contacts are provided by glycine 50, threonine 51, glycine 52, lysine 53, threonine 54, serine 90, lysine 225, leucine 226, arginine 227, threonine 229, histidine 231, threonine 241, aspartate 242, threonine 291, glycine 292, threonine 293, glycine 294, lysine 295, threonine 296, and leucine 297. Threonine 54 provides a ligand contact to Mg(2+). Residue threonine 296 coordinates Mg(2+). Glutamate 319 is a Mg(2+) binding site. Residue tryptophan 332 coordinates ATP. Serine 432 carries the post-translational modification Phosphoserine; by autocatalysis. Position 433 is a phosphothreonine; by autocatalysis (threonine 433). Arginine 452, lysine 458, methionine 459, arginine 460, serine 462, histidine 464, and lysine 466 together coordinate ATP.

Belongs to the KaiC family. Homohexamer; hexamerization is dependent on ATP-binding. The KaiABC complex composition changes during the circadian cycle to control KaiC phosphorylation. Complexes KaiC(6), KaiA(2-4):KaiC(6), KaiB(6):KaiC(6) and KaiC(6):KaiB(6):KaiA(12) are among the most important forms, many form cooperatively. KaiC interacts with SasA, activating its autokinase function and leading to RpaA activation. Requires Mg(2+) as cofactor. Post-translationally, phosphorylated on serine and threonine residues by autocatalysis. Has a 4 step phosphorylation cycle; the autokinase acts first on Thr-433, then Ser-432. When Ser-432 is modified KaiC switches to an autophosphatase mode, acting first on phospho-Thr-433 then phospho-Ser-432.

The catalysed reaction is L-seryl-[protein] + ATP = O-phospho-L-seryl-[protein] + ADP + H(+). It catalyses the reaction L-threonyl-[protein] + ATP = O-phospho-L-threonyl-[protein] + ADP + H(+). It carries out the reaction ATP + H2O = ADP + phosphate + H(+). Its activity is regulated as follows. The interaction with KaiA enhances its phosphorylation status, while the interaction with KaiB decreases it. Central component of the KaiABC oscillator complex, which constitutes the main circadian regulator in cyanobacteria. Complex composition changes during the circadian cycle to control KaiC phosphorylation. KaiA stimulates KaiC autophosphorylation, while KaiB sequesters KaiA, leading to KaiC autodephosphorylation. Clock output pathways impact the RpaA transcriptional regulator. KaiC enhances the autophosphorylation activity of SasA, which then transfers its phosphate group to RpaA to activate it. KaiB and KaiC together enhance the phospho-RpaA dephosphatase activity of CikA. In terms of biological role, has a weak, temperature-independent ATPase activity; ATPase activity defines the circadian period. The phosphorylation state of KaiC modulates its ATPase activity and effects KaiB binding. The protein is Circadian clock oscillator protein KaiC of Acaryochloris marina (strain MBIC 11017).